Consider the following 480-residue polypeptide: 3,6-anhydro-alpha-L-galactose dehydrogenase (480 aa).

NADP(+) contacts are provided by residues 149 to 150 (WN), 173 to 176 (KPTS), and 226 to 227 (GS). Catalysis depends on Glu248, which acts as the Proton acceptor. Leu249 provides a ligand contact to NADP(+). Cys282 (nucleophile) is an active-site residue. NADP(+) is bound at residue Glu383.

The protein belongs to the aldehyde dehydrogenase family.

The enzyme catalyses 3,6-anhydro-alpha-L-galactopyranose + NADP(+) + H2O = 3,6-anhydro-L-galactonate + NADPH + 2 H(+). It catalyses the reaction 3,6-anhydro-alpha-L-galactopyranose + NAD(+) + H2O = 3,6-anhydro-L-galactonate + NADH + 2 H(+). In terms of biological role, involved in the degradation of 3,6-anhydro-L-galactose, which is the major monomeric sugar of red macroalgae. Catalyzes the oxidation of 3,6-anhydro-L-galactose (AHG) to form 3,6-anhydrogalactonate (AHGA). This is 3,6-anhydro-alpha-L-galactose dehydrogenase from Vibrio sp. (strain EJY3).